Here is a 343-residue protein sequence, read N- to C-terminus: Protein RecA (343 aa).

ATP is bound at residue 66 to 73; the sequence is GPESSGKT.

The protein belongs to the RecA family.

Its subcellular location is the cytoplasm. Can catalyze the hydrolysis of ATP in the presence of single-stranded DNA, the ATP-dependent uptake of single-stranded DNA by duplex DNA, and the ATP-dependent hybridization of homologous single-stranded DNAs. It interacts with LexA causing its activation and leading to its autocatalytic cleavage. This is Protein RecA from Rickettsia bellii (strain RML369-C).